Here is a 297-residue protein sequence, read N- to C-terminus: MMVNDIEYIRQAEATRVQVLSEALPYIQQFAGRTVVVKYGGAAMKDSHLKDQVIRDIVFLSCVGLRPILVHGGGPEINSWLDKLGIEAQFKNGLRVTDAPTMDVVEMVLVGRVNKEIVSLINQAGGLAVGLCGKDGNLITARPQGQEGIGFVGEVSNVNIKILETLASNGYIPVVSSVAADDSGQAYNINADTVAGEIAAALGAEKLILLTDTRGILKDYQDPGTLIPKVDIREARELINSGVVSGGMIPKVTCCVRSLAQGVRAAHIIDGRIPHALLLEIFTDVGIGTMILGSQYS.

Residues 73–74 (GG), Arg-95, and Asn-188 contribute to the substrate site.

This sequence belongs to the acetylglutamate kinase family. ArgB subfamily.

It localises to the cytoplasm. It carries out the reaction N-acetyl-L-glutamate + ATP = N-acetyl-L-glutamyl 5-phosphate + ADP. Its pathway is amino-acid biosynthesis; L-arginine biosynthesis; N(2)-acetyl-L-ornithine from L-glutamate: step 2/4. Its function is as follows. Catalyzes the ATP-dependent phosphorylation of N-acetyl-L-glutamate. The protein is Acetylglutamate kinase of Nostoc sp. (strain PCC 7120 / SAG 25.82 / UTEX 2576).